The sequence spans 724 residues: Ribosomal RNA large subunit methyltransferase K/L (724 aa).

Positions 42–153 constitute a THUMP domain; the sequence is DAQRLVLWSR…KGRATLSVDL (112 aa).

Belongs to the methyltransferase superfamily. RlmKL family.

The protein resides in the cytoplasm. The enzyme catalyses guanosine(2445) in 23S rRNA + S-adenosyl-L-methionine = N(2)-methylguanosine(2445) in 23S rRNA + S-adenosyl-L-homocysteine + H(+). It catalyses the reaction guanosine(2069) in 23S rRNA + S-adenosyl-L-methionine = N(2)-methylguanosine(2069) in 23S rRNA + S-adenosyl-L-homocysteine + H(+). In terms of biological role, specifically methylates the guanine in position 2445 (m2G2445) and the guanine in position 2069 (m7G2069) of 23S rRNA. This Xylella fastidiosa (strain M12) protein is Ribosomal RNA large subunit methyltransferase K/L.